Consider the following 372-residue polypeptide: N-acetylneuraminate epimerase 1 (372 aa).

The signal sequence occupies residues 1 to 25 (MITMKVKNFIYLPFCLFIGTSVAGA). Kelch repeat units lie at residues 44-88 (KIYI…TIID), 90-141 (KIYV…FIHN), 143-177 (HAVSTGGVNENIFNGYFSDVELSKGNSALTEKVNR), 178-223 (DYFS…IFAE), 226-269 (IYIL…VSGA), 291-340 (EKYS…PWQG), and 342-371 (MLILGGEKKDGKAVSDVIYLKKNDKQIKIV). Glu232 acts as the Proton acceptor in catalysis.

The protein belongs to the NanM family. Homodimer.

The protein localises to the periplasm. It carries out the reaction N-acetyl-alpha-neuraminate = N-acetyl-beta-neuraminate. In terms of biological role, converts alpha-N-acetylneuranimic acid (Neu5Ac) to the beta-anomer, accelerating the equilibrium between the alpha- and beta-anomers. Probably facilitates sialidase-negative bacteria to compete successfully for limited amounts of extracellular Neu5Ac, which is likely taken up in the beta-anomer. In addition, the rapid removal of sialic acid from solution might be advantageous to the bacterium to damp down host responses. The protein is N-acetylneuraminate epimerase 1 of Escherichia coli O6:H1 (strain CFT073 / ATCC 700928 / UPEC).